Consider the following 394-residue polypeptide: MAAASGYTDLREKLKSMTSRDNYKAGSREAAAAAAAAVAAAAAAAAAAEPYAAPGVKRKYPEDSDPERSDFEEQQLQKEEEARKVKSGIRQMRLFSQDECAKIEARIDEVVSRAEKGLYNEHTVDRAPLRNKYFFGEGYTYGAQLQKRGPGQERLYPPGDVDEIPEWVHQLVIQKLVEHRVIPEGFVNSAVINDYQPGGCIVSHVDPIHIFERPIVSVSFFSDSALCFGCKFQFKPIRVSEPVLSLPVRRGSVTVLSGYAADEITHCIRPQDIKERRAVIILRKTRLDAPRLETKSLSSSVLPPSYASDRLSGNNRDPALKPKRSHRKADPDAAHRPRILEMDKEENRRSVLLPAHRRAGRFSSENYRRKSYEPGEDCSEAAGSPARKVKMRRH.

Disordered stretches follow at residues 1-26 and 48-83; these read MAAA…YKAG and AEPY…EEAR. A2 is modified (N-acetylalanine). A Glycyl lysine isopeptide (Lys-Gly) (interchain with G-Cter in ubiquitin) cross-link involves residue K57. Over residues 59–83 the composition is skewed to basic and acidic residues; that stretch reads KYPEDSDPERSDFEEQQLQKEEEAR. Residues S64 and S69 each carry the phosphoserine modification. A coiled-coil region spans residues 67-116; it reads ERSDFEEQQLQKEEEARKVKSGIRQMRLFSQDECAKIEARIDEVVSRAEK. A Glycyl lysine isopeptide (Lys-Gly) (interchain with G-Cter in SUMO1) cross-link involves residue K86. The residue at position 87 (S87) is a Phosphoserine. An N6-acetyllysine modification is found at K132. Y139 is an active-site residue. Positions 193, 195, and 204 each coordinate 2-oxoglutarate. C230 and C267 form a disulfide bridge. At K235 the chain carries N6-acetyllysine. H266 and R277 together coordinate 2-oxoglutarate. Residues 298–394 form a disordered region; it reads SSSVLPPSYA…PARKVKMRRH (97 aa). A Glycyl lysine isopeptide (Lys-Gly) (interchain with G-Cter in SUMO1) cross-link involves residue K321. S325 carries the post-translational modification Phosphoserine. K328 is covalently cross-linked (Glycyl lysine isopeptide (Lys-Gly) (interchain with G-Cter in SUMO2)). The span at 328 to 349 shows a compositional bias: basic and acidic residues; it reads KADPDAAHRPRILEMDKEENRR. 2 positions are modified to phosphoserine: S371 and S384.

This sequence belongs to the alkB family. In terms of assembly, monomer. Interacts with RBM33; promoting desumoylation by SENP1 and recruitment to N(6)-methyladenosine-containing mRNAs. Interacts (when acetylated by KAT8) with PSPC1; interaction facilitates recognition of N(6)-methyladenosine (m6A) mRNA. Fe(2+) serves as cofactor. In terms of processing, phosphorylated at Ser-87 and Ser-325 in response to reactive oxygen species (ROS), promoting sumoylation and inactivation. Acetylated by KAT8 at Lys-235, promoting interaction with PSPC1, thereby facilitating recognition of N(6)-methyladenosine (m6A) mRNA by ALKBH5. Deacetylated at Lys-235 by HDAC7. Post-translationally, sumoylated at Lys-86 and Lys-321 by PIAS4 following phosphorylation at Ser-87 and Ser-325 in response to reactive oxygen species (ROS), inhibiting the RNA demethylase activity. Desumoylated by SENP1; relieving RNA demethylase inhibition, leading to N(6)-methyladenosine-containing mRNAs demethylation. In terms of processing, ubiquitinated at Lys-57 via 'Lys-48'-linked polyubiquitin chain, leading to its degradation by the proteasome. Deubiquitinated at Lys-57 by USP9X, promoting its stabilizazion.

The protein localises to the nucleus speckle. The catalysed reaction is an N(6)-methyladenosine in mRNA + 2-oxoglutarate + O2 = an adenosine in mRNA + formaldehyde + succinate + CO2. RNA demethylase activity is inhibited following sumoylation. Inhibition is relieved following desumoylation. In terms of biological role, dioxygenase that specifically demethylates N(6)-methyladenosine (m6A) RNA, the most prevalent internal modification of messenger RNA (mRNA) in higher eukaryotes. Demethylates RNA by oxidative demethylation, which requires molecular oxygen, alpha-ketoglutarate and iron. Demethylation of m6A mRNA affects mRNA processing, translation and export. Can also demethylate N(6)-methyladenosine in single-stranded DNA (in vitro). Required for the late meiotic and haploid phases of spermatogenesis by mediating m6A demethylation in spermatocytes and round spermatids: m6A demethylation of target transcripts is required for correct splicing and the production of longer 3'-UTR mRNAs in male germ cells. Involved in paraspeckle assembly, a nuclear membraneless organelle, by undergoing liquid-liquid phase separation. Paraspeckle assembly is coupled with m6A demethylation of RNAs, such as NEAT1 non-coding RNA. Also acts as a negative regulator of T-cell development: inhibits gamma-delta T-cell proliferation via demethylation of JAG1 and NOTCH2 transcripts. Inhibits regulatory T-cell (Treg) recruitment by mediating demethylation and destabilization of CCL28 mRNAs. This chain is RNA demethylase ALKBH5 (ALKBH5), found in Bos taurus (Bovine).